The primary structure comprises 243 residues: Max-interacting protein 1 (243 aa).

A bHLH domain is found at 76-128; it reads HYRSTHNELEKNRRAHLRLCLERLKTLIPLGPECSRHTTLGLLNKAKAHIKKL. The tract at residues 164 to 235 is disordered; that stretch reads EAERIRTDSM…TASDEGYSSC (72 aa). The segment covering 188-198 has biased composition (acidic residues); the sequence is DQEEMEVDVES. Polar residues predominate over residues 222–235; sequence SLQSTASDEGYSSC.

In terms of assembly, efficient DNA binding requires dimerization with another bHLH protein. Binds DNA as a heterodimer with MAX.

It is found in the nucleus. In terms of biological role, transcriptional repressor. MXI1 binds with MAX to form a sequence-specific DNA-binding protein complex which recognizes the core sequence 5'-CAC[GA]TG-3'. MXI1 thus antagonizes MYC transcriptional activity by competing for MAX. The chain is Max-interacting protein 1 (mxi1) from Danio rerio (Zebrafish).